Here is a 482-residue protein sequence, read N- to C-terminus: Retrovirus-related Pol polyprotein from type-1 retrotransposable element R2 (482 aa).

The Reverse transcriptase domain occupies 1-84 (AYADDLILFA…DYFKYLGSRY (84 aa)). The nucleic acid-binding endonuclease stretch occupies residues 208–482 (QIPAVEKFYQ…ATGGRGRGDI (275 aa)).

The catalysed reaction is DNA(n) + a 2'-deoxyribonucleoside 5'-triphosphate = DNA(n+1) + diphosphate. The protein is Retrovirus-related Pol polyprotein from type-1 retrotransposable element R2 of Popillia japonica (Japanese beetle).